An 87-amino-acid chain; its full sequence is Large ribosomal subunit protein bL31B (87 aa).

It belongs to the bacterial ribosomal protein bL31 family. Type B subfamily. As to quaternary structure, part of the 50S ribosomal subunit.

This is Large ribosomal subunit protein bL31B from Latilactobacillus sakei subsp. sakei (strain 23K) (Lactobacillus sakei subsp. sakei).